The sequence spans 349 residues: Glycerol-3-phosphate dehydrogenase [NAD(+)], cytoplasmic (349 aa).

NAD(+) contacts are provided by residues 10–15 (GSGDWG), K120, and A153. A substrate-binding site is contributed by K120. Phosphoserine is present on S154. The Proton acceptor role is filled by K204. R269 provides a ligand contact to NAD(+). Position 269–270 (269–270 (RN)) interacts with substrate. K289 carries the N6-succinyllysine modification. NAD(+)-binding residues include K296 and Q298. Y326 carries the post-translational modification Phosphotyrosine.

It belongs to the NAD-dependent glycerol-3-phosphate dehydrogenase family. As to quaternary structure, homodimer.

It is found in the cytoplasm. The catalysed reaction is sn-glycerol 3-phosphate + NAD(+) = dihydroxyacetone phosphate + NADH + H(+). In terms of biological role, has glycerol-3-phosphate dehydrogenase activity. This Oryctolagus cuniculus (Rabbit) protein is Glycerol-3-phosphate dehydrogenase [NAD(+)], cytoplasmic (GPD1).